We begin with the raw amino-acid sequence, 581 residues long: Spastin (581 aa).

Residues Met1–Gly12 are compositionally biased toward basic residues. The tract at residues Met1 to Ala39 is disordered. The interval Met1 to Leu48 is required for nuclear localization. Residues Met1 to Pro54 are Cytoplasmic-facing. Positions Met1 to Gln78 are required for interaction with ATL1. Residues Met1 to Leu191 form a required for midbody localization region. Residues Met1–Lys265 form a required for interaction with RTN1 region. A Nuclear localization signal motif is present at residues Pro4 to Lys11. Positions Pro20–Ala39 are enriched in pro residues. The interval Leu48–Met85 is required for interaction with SSNA1 and microtubules. An intramembrane region (helical) is located at residues Leu55–Trp75. Positions Val57–Leu65 match the Nuclear export signal motif. The Cytoplasmic segment spans residues Leu76–Val581. Positions Ser90–Ala111 are disordered. The segment covering Pro97–Gly106 has biased composition (pro residues). An MIT domain is found at His118–Leu192. Residues Glu193–Val581 are sufficient for microtubule severing. Residues Gly195 to Lys277 are disordered. Over residues His206–Leu225 the composition is skewed to polar residues. 2 positions are modified to phosphoserine: Ser210 and Ser233. Positions Ser235–Ile293 are required for interaction with microtubules and microtubule severing. The segment covering His254–Thr271 has biased composition (polar residues). Position 271 is a phosphothreonine (Thr271). The Nuclear localization signal motif lies at Arg274 to Lys277. Residue Gly347–Thr354 participates in ATP binding. Phosphoserine is present on Ser562.

This sequence belongs to the AAA ATPase family. Spastin subfamily. As to quaternary structure, homohexamer. Mostly monomeric, but assembles into hexameric structure for short periods of time. Oligomerization seems to be a prerequisite for catalytic activity. Binding to ATP in a cleft between two adjacent subunits stabilizes the homohexameric form. Binds to microtubules at least in part via the alpha-tubulin and beta-tubulin tails. The hexamer adopts a ring conformation through which microtubules pass prior to being severed. Does not interact strongly with tubulin heterodimers. Interacts (via MIT domain) with CHMP1B; the interaction is direct. Interacts with SSNA1. Interacts with ATL1. Interacts with RTN1. Interacts with ZFYVE27. Interacts with REEP1. Interacts (via MIT domain) with IST1.

It is found in the membrane. Its subcellular location is the endoplasmic reticulum. The protein resides in the midbody. It localises to the cytoplasm. The protein localises to the cytoskeleton. It is found in the microtubule organizing center. Its subcellular location is the centrosome. The protein resides in the perinuclear region. It localises to the nucleus. The protein localises to the spindle. It is found in the cell projection. Its subcellular location is the axon. The catalysed reaction is n ATP + n H2O + a microtubule = n ADP + n phosphate + (n+1) alpha/beta tubulin heterodimers.. Its activity is regulated as follows. Allosteric enzyme with a cooperative mechanism; at least two neighbor subunits influence each other strongly in spastin hexamers. Microtubule binding promotes cooperative interactions among spastin subunits. Functionally, ATP-dependent microtubule severing protein that specifically recognizes and cuts microtubules that are polyglutamylated. Preferentially recognizes and acts on microtubules decorated with short polyglutamate tails: severing activity increases as the number of glutamates per tubulin rises from one to eight, but decreases beyond this glutamylation threshold. Severing activity is not dependent on tubulin acetylation or detyrosination. Microtubule severing promotes reorganization of cellular microtubule arrays and the release of microtubules from the centrosome following nucleation. It is critical for the biogenesis and maintenance of complex microtubule arrays in axons, spindles and cilia. SPAST is involved in abscission step of cytokinesis and nuclear envelope reassembly during anaphase in cooperation with the ESCRT-III complex. Recruited at the midbody, probably by IST1, and participates in membrane fission during abscission together with the ESCRT-III complex. Recruited to the nuclear membrane by IST1 and mediates microtubule severing, promoting nuclear envelope sealing and mitotic spindle disassembly during late anaphase. Required for membrane traffic from the endoplasmic reticulum (ER) to the Golgi and endosome recycling. Recruited by IST1 to endosomes and regulates early endosomal tubulation and recycling by mediating microtubule severing. Probably plays a role in axon growth and the formation of axonal branches. In Rattus norvegicus (Rat), this protein is Spastin.